Consider the following 267-residue polypeptide: Thiamine pyrophosphokinase 2 (267 aa).

Belongs to the thiamine pyrophosphokinase family.

It is found in the cytoplasm. It localises to the cytosol. The enzyme catalyses thiamine + ATP = thiamine diphosphate + AMP + H(+). It participates in cofactor biosynthesis; thiamine diphosphate biosynthesis; thiamine diphosphate from thiamine: step 1/1. Functionally, catalyzes the phosphorylation of thiamine to thiamine pyrophosphate (TPP). TPP is an active cofactor for enzymes involved in glycolysis and energy production. Plant leaves require high levels of TPP for photosynthesis and carbohydrate metabolism. The polypeptide is Thiamine pyrophosphokinase 2 (TPK2) (Oryza sativa subsp. japonica (Rice)).